Here is a 321-residue protein sequence, read N- to C-terminus: Auxin-responsive protein IAA8 (321 aa).

The EAR-like (transcriptional repression) signature appears at 54-58; that stretch reads LRLGL. A PB1 domain is found at 199 to 301; the sequence is VLFVKVSMDG…TCQKLKIMKG (103 aa).

Belongs to the Aux/IAA family. Homodimers and heterodimers. Interacts with TPL. Highly expressed in the whole plant.

The protein localises to the nucleus. Its function is as follows. Aux/IAA proteins are short-lived transcriptional factors that function as repressors of early auxin response genes at low auxin concentrations. Repression is thought to result from the interaction with auxin response factors (ARFs), proteins that bind to the auxin-responsive promoter element (AuxRE). Formation of heterodimers with ARF proteins may alter their ability to modulate early auxin response genes expression. The protein is Auxin-responsive protein IAA8 (IAA8) of Arabidopsis thaliana (Mouse-ear cress).